We begin with the raw amino-acid sequence, 155 residues long: Sec-independent protein translocase protein TatB (155 aa).

Residues 1 to 21 (MIDLGISKIALIGAVALIVIG) traverse the membrane as a helical segment. 2 disordered regions span residues 81-103 (ASDF…LPGF) and 131-155 (SGIR…SRKA). Over residues 89–98 (SETTGSTSSD) the composition is skewed to polar residues.

The protein belongs to the TatB family. In terms of assembly, the Tat system comprises two distinct complexes: a TatABC complex, containing multiple copies of TatA, TatB and TatC subunits, and a separate TatA complex, containing only TatA subunits. Substrates initially bind to the TatABC complex, which probably triggers association of the separate TatA complex to form the active translocon.

Its subcellular location is the cell inner membrane. Part of the twin-arginine translocation (Tat) system that transports large folded proteins containing a characteristic twin-arginine motif in their signal peptide across membranes. Together with TatC, TatB is part of a receptor directly interacting with Tat signal peptides. TatB may form an oligomeric binding site that transiently accommodates folded Tat precursor proteins before their translocation. The polypeptide is Sec-independent protein translocase protein TatB (Polaromonas naphthalenivorans (strain CJ2)).